Reading from the N-terminus, the 107-residue chain is Defensin-like protein 242 (107 aa).

Positions 1–22 (MKVVAIFLASCVLFSLIPTHLS) are cleaved as a signal peptide. 4 cysteine pairs are disulfide-bonded: Cys45–Cys100, Cys55–Cys84, Cys65–Cys94, and Cys82–Cys96.

Belongs to the DEFL family.

The protein localises to the secreted. The protein is Defensin-like protein 242 (SCRL10) of Arabidopsis thaliana (Mouse-ear cress).